We begin with the raw amino-acid sequence, 324 residues long: MELTGVTAQSIFDDNAADLKLSWVAGLEGADRAFDVDFAKEATSAADLVGHLNLIHPNRIQVLGKPEITYYQRLSEENRKRQMGELILLEPPFLVVADGVDPPPDLELRCTRSSTPLFTSPISSAAVIDHLRLYLSRISAPRVTMHGVFLDILGMGVLIMGDSGLGKSELGLELISRGHGLVADDAVDFVRLGPDFIEGRCPPLLQNLLEVRGLGLLDIKTIFGETAVRRKMKIKLIVQLVRRNDGEFERLPLDSQYMDVLGLPIHMVKIQVAAGRNLAVLVEAAVRNTILRLRGIDTLRDFMDRQRAAMQAEAASHSPQGRLL.

Catalysis depends on residues histidine 146 and lysine 167. 161-168 lines the ATP pocket; that stretch reads GDSGLGKS. Serine 168 serves as a coordination point for Mg(2+). The Proton acceptor; for phosphorylation activity. Proton donor; for dephosphorylation activity role is filled by aspartate 185. An important for the catalytic mechanism of both phosphorylation and dephosphorylation region spans residues 209–218; sequence LEVRGLGLLD. Glutamate 210 contacts Mg(2+). The active site involves arginine 250. Residues 271–276 form an important for the catalytic mechanism of dephosphorylation region; it reads QVAAGR.

Belongs to the HPrK/P family. Homohexamer. Requires Mg(2+) as cofactor.

It catalyses the reaction [HPr protein]-L-serine + ATP = [HPr protein]-O-phospho-L-serine + ADP + H(+). It carries out the reaction [HPr protein]-O-phospho-L-serine + phosphate + H(+) = [HPr protein]-L-serine + diphosphate. In terms of biological role, catalyzes the ATP- as well as the pyrophosphate-dependent phosphorylation of a specific serine residue in HPr, a phosphocarrier protein of the phosphoenolpyruvate-dependent sugar phosphotransferase system (PTS). HprK/P also catalyzes the pyrophosphate-producing, inorganic phosphate-dependent dephosphorylation (phosphorolysis) of seryl-phosphorylated HPr (P-Ser-HPr). The protein is HPr kinase/phosphorylase of Ralstonia nicotianae (strain ATCC BAA-1114 / GMI1000) (Ralstonia solanacearum).